Consider the following 336-residue polypeptide: Holliday junction branch migration complex subunit RuvB (336 aa).

Residues 1–11 are compositionally biased toward basic and acidic residues; sequence MDDDKLLSGDK. A disordered region spans residues 1 to 21; it reads MDDDKLLSGDKADDEEASLEK. The large ATPase domain (RuvB-L) stretch occupies residues 1-184; that stretch reads MDDDKLLSGD…FGIVEHMAYY (184 aa). Residues Leu-23, Arg-24, Gly-65, Lys-68, Thr-69, Thr-70, 131 to 133, Arg-174, Tyr-184, and Arg-221 contribute to the ATP site; that span reads EDF. Residue Thr-69 coordinates Mg(2+). The interval 185-255 is small ATPAse domain (RuvB-S); the sequence is EVADLEDIVK…IVARSLTYLR (71 aa). Residues 258–336 are head domain (RuvB-H); sequence DAGLDETDNK…HLGFPYPENK (79 aa). 2 residues coordinate DNA: Arg-313 and Arg-318.

It belongs to the RuvB family. Homohexamer. Forms an RuvA(8)-RuvB(12)-Holliday junction (HJ) complex. HJ DNA is sandwiched between 2 RuvA tetramers; dsDNA enters through RuvA and exits via RuvB. An RuvB hexamer assembles on each DNA strand where it exits the tetramer. Each RuvB hexamer is contacted by two RuvA subunits (via domain III) on 2 adjacent RuvB subunits; this complex drives branch migration. In the full resolvosome a probable DNA-RuvA(4)-RuvB(12)-RuvC(2) complex forms which resolves the HJ.

It localises to the cytoplasm. It carries out the reaction ATP + H2O = ADP + phosphate + H(+). Functionally, the RuvA-RuvB-RuvC complex processes Holliday junction (HJ) DNA during genetic recombination and DNA repair, while the RuvA-RuvB complex plays an important role in the rescue of blocked DNA replication forks via replication fork reversal (RFR). RuvA specifically binds to HJ cruciform DNA, conferring on it an open structure. The RuvB hexamer acts as an ATP-dependent pump, pulling dsDNA into and through the RuvAB complex. RuvB forms 2 homohexamers on either side of HJ DNA bound by 1 or 2 RuvA tetramers; 4 subunits per hexamer contact DNA at a time. Coordinated motions by a converter formed by DNA-disengaged RuvB subunits stimulates ATP hydrolysis and nucleotide exchange. Immobilization of the converter enables RuvB to convert the ATP-contained energy into a lever motion, pulling 2 nucleotides of DNA out of the RuvA tetramer per ATP hydrolyzed, thus driving DNA branch migration. The RuvB motors rotate together with the DNA substrate, which together with the progressing nucleotide cycle form the mechanistic basis for DNA recombination by continuous HJ branch migration. Branch migration allows RuvC to scan DNA until it finds its consensus sequence, where it cleaves and resolves cruciform DNA. This Lactiplantibacillus plantarum (strain ATCC BAA-793 / NCIMB 8826 / WCFS1) (Lactobacillus plantarum) protein is Holliday junction branch migration complex subunit RuvB.